We begin with the raw amino-acid sequence, 186 residues long: NADH-ubiquinone oxidoreductase 17.8 kDa subunit, mitochondrial (186 aa).

A mitochondrion-targeting transit peptide spans 1–26 (MSSFRLGVSRVARQVRAPCVRNTRRY). The disordered stretch occupies residues 22–49 (NTRRYASDSHAPADHTHSAAGHGEHHHA). Basic and acidic residues predominate over residues 26-49 (YASDSHAPADHTHSAAGHGEHHHA). A helical membrane pass occupies residues 58-78 (LGTAFYVIFGAIPAFGALYYF).

In terms of assembly, complex I is composed of about 40 different subunits.

It is found in the mitochondrion inner membrane. The enzyme catalyses a ubiquinone + NADH + 5 H(+)(in) = a ubiquinol + NAD(+) + 4 H(+)(out). Functionally, transfer of electrons from NADH to the respiratory chain. The immediate electron acceptor for the enzyme is believed to be ubiquinone. The chain is NADH-ubiquinone oxidoreductase 17.8 kDa subunit, mitochondrial (nuo17.8) from Neurospora crassa (strain ATCC 24698 / 74-OR23-1A / CBS 708.71 / DSM 1257 / FGSC 987).